The following is a 143-amino-acid chain: Nucleoside diphosphate kinase (143 aa).

The ATP site is built by Lys-11, Phe-59, Arg-87, Thr-93, Arg-104, and Asn-114. The Pros-phosphohistidine intermediate role is filled by His-117.

Belongs to the NDK family. As to quaternary structure, homotetramer. The cofactor is Mg(2+).

The protein resides in the cytoplasm. The catalysed reaction is a 2'-deoxyribonucleoside 5'-diphosphate + ATP = a 2'-deoxyribonucleoside 5'-triphosphate + ADP. The enzyme catalyses a ribonucleoside 5'-diphosphate + ATP = a ribonucleoside 5'-triphosphate + ADP. Major role in the synthesis of nucleoside triphosphates other than ATP. The ATP gamma phosphate is transferred to the NDP beta phosphate via a ping-pong mechanism, using a phosphorylated active-site intermediate. In Shewanella woodyi (strain ATCC 51908 / MS32), this protein is Nucleoside diphosphate kinase.